The primary structure comprises 376 residues: Tetraacyldisaccharide 4'-kinase (376 aa).

Position 51 to 58 (Ala-51 to Thr-58) interacts with ATP.

This sequence belongs to the LpxK family.

It catalyses the reaction a lipid A disaccharide + ATP = a lipid IVA + ADP + H(+). It participates in glycolipid biosynthesis; lipid IV(A) biosynthesis; lipid IV(A) from (3R)-3-hydroxytetradecanoyl-[acyl-carrier-protein] and UDP-N-acetyl-alpha-D-glucosamine: step 6/6. In terms of biological role, transfers the gamma-phosphate of ATP to the 4'-position of a tetraacyldisaccharide 1-phosphate intermediate (termed DS-1-P) to form tetraacyldisaccharide 1,4'-bis-phosphate (lipid IVA). The sequence is that of Tetraacyldisaccharide 4'-kinase from Bacteroides fragilis (strain YCH46).